The chain runs to 81 residues: Neuronatin (81 aa).

Belongs to the neuronatin family.

May participate in the maintenance of segment identity in the hindbrain and pituitary development, and maturation or maintenance of the overall structure of the nervous system. May function as a regulatory subunit of ion channels. In Sus scrofa (Pig), this protein is Neuronatin (NNAT).